A 246-amino-acid chain; its full sequence is E3 ubiquitin-protein ligase RNF182 (246 aa).

The RING-type zinc finger occupies 22–70 (CKICYNRYNLRQRKPKVLGCCHRVCAKCLYKLVDCGESPQCVIVCPFCR). 2 helical membrane-spanning segments follow: residues 184–204 (VFVW…IYLL) and 211–231 (LGVV…IYGF).

Interacts with ATP6V0C.

It localises to the membrane. The protein resides in the cytoplasm. The enzyme catalyses S-ubiquitinyl-[E2 ubiquitin-conjugating enzyme]-L-cysteine + [acceptor protein]-L-lysine = [E2 ubiquitin-conjugating enzyme]-L-cysteine + N(6)-ubiquitinyl-[acceptor protein]-L-lysine.. It functions in the pathway protein modification; protein ubiquitination. Functionally, E3 ubiquitin-protein ligase that mediates the ubiquitination of atp6v0c and targets it to degradation via the ubiquitin-proteasome pathway. In Xenopus laevis (African clawed frog), this protein is E3 ubiquitin-protein ligase RNF182 (rnf182).